The sequence spans 143 residues: Putative protein FPV235 (143 aa).

This is Putative protein FPV235 from Vertebrata (FPV).